The primary structure comprises 786 residues: Endonuclease MutS2 (786 aa).

Residue 335-342 (GPNTGGKT) participates in ATP binding. The 76-residue stretch at 711–786 (LDLRGERFEN…GLGVTVVELK (76 aa)) folds into the Smr domain.

The protein belongs to the DNA mismatch repair MutS family. MutS2 subfamily. As to quaternary structure, homodimer. Binds to stalled ribosomes, contacting rRNA.

Its function is as follows. Endonuclease that is involved in the suppression of homologous recombination and thus may have a key role in the control of bacterial genetic diversity. Functionally, acts as a ribosome collision sensor, splitting the ribosome into its 2 subunits. Detects stalled/collided 70S ribosomes which it binds and splits by an ATP-hydrolysis driven conformational change. Acts upstream of the ribosome quality control system (RQC), a ribosome-associated complex that mediates the extraction of incompletely synthesized nascent chains from stalled ribosomes and their subsequent degradation. Probably generates substrates for RQC. In Bacillus anthracis (strain A0248), this protein is Endonuclease MutS2.